The chain runs to 98 residues: Cystatin-A (98 aa).

An N-acetylmethionine modification is found at Met-1. Residues 46-50 (QVVAG) carry the Secondary area of contact motif.

It belongs to the cystatin family.

The protein resides in the cytoplasm. Functionally, this is an intracellular thiol proteinase inhibitor. In Bos taurus (Bovine), this protein is Cystatin-A (CSTA).